Here is an 86-residue protein sequence, read N- to C-terminus: Small ribosomal subunit protein bS20 (86 aa).

A compositionally biased stretch (basic residues) spans 1–11 (MANIKSAKKRA). A disordered region spans residues 1–26 (MANIKSAKKRAITSEKNRQHNASRRS).

Belongs to the bacterial ribosomal protein bS20 family.

Functionally, binds directly to 16S ribosomal RNA. The sequence is that of Small ribosomal subunit protein bS20 from Pseudoalteromonas translucida (strain TAC 125).